A 347-amino-acid chain; its full sequence is MTIKKYKTALSGMFPEEIQSFCGLKEKFRAQQIFHWIASGVNSFDEMTNLSFDMRSKLKNDFSLFSTKIKEALKDKDGTIKLAVELYDGSVIETVLLTDKAKRKTACVSCQAGCPMKCAFCKTGQIGFLRNLSASEIVEQFLHLEREAGSLDNIVFMGMGEPMLNLPEIDKAINILAHPKGRNLSKRRITISTSGLCKGIYEMADKGPEVRLAVSLTTADETLRSELMPITKTNSLDELKQAIKYFNSKSNKRVTLELALMKGLNTDKKAAQEVIEFAKGLECFINLIPWNPVEGLNFKTPSETEVRTFETYLKKAGLNISTRQKRGQSIGGACGQLGSTAARSNRF.

Residue Glu-93 is the Proton acceptor of the active site. The 224-residue stretch at 100–323 (KAKRKTACVS…KKAGLNISTR (224 aa)) folds into the Radical SAM core domain. An intrachain disulfide couples Cys-107 to Cys-334. Residues Cys-114, Cys-118, and Cys-121 each contribute to the [4Fe-4S] cluster site. S-adenosyl-L-methionine contacts are provided by residues 160 to 161 (GE), Ser-192, 215 to 217 (SLT), and Asn-291. The active-site S-methylcysteine intermediate is the Cys-334.

Belongs to the radical SAM superfamily. RlmN family. It depends on [4Fe-4S] cluster as a cofactor.

Its subcellular location is the cytoplasm. It carries out the reaction adenosine(2503) in 23S rRNA + 2 reduced [2Fe-2S]-[ferredoxin] + 2 S-adenosyl-L-methionine = 2-methyladenosine(2503) in 23S rRNA + 5'-deoxyadenosine + L-methionine + 2 oxidized [2Fe-2S]-[ferredoxin] + S-adenosyl-L-homocysteine. The enzyme catalyses adenosine(37) in tRNA + 2 reduced [2Fe-2S]-[ferredoxin] + 2 S-adenosyl-L-methionine = 2-methyladenosine(37) in tRNA + 5'-deoxyadenosine + L-methionine + 2 oxidized [2Fe-2S]-[ferredoxin] + S-adenosyl-L-homocysteine. In terms of biological role, specifically methylates position 2 of adenine 2503 in 23S rRNA and position 2 of adenine 37 in tRNAs. This chain is Probable dual-specificity RNA methyltransferase RlmN, found in Treponema denticola (strain ATCC 35405 / DSM 14222 / CIP 103919 / JCM 8153 / KCTC 15104).